Consider the following 367-residue polypeptide: Glutamate 5-kinase (367 aa).

Lysine 10 serves as a coordination point for ATP. Substrate is bound by residues aspartate 137 and asparagine 149. Residues threonine 169–aspartate 170 and threonine 211–lysine 217 contribute to the ATP site. One can recognise a PUA domain in the interval alanine 275–glutamate 353.

This sequence belongs to the glutamate 5-kinase family.

It localises to the cytoplasm. It carries out the reaction L-glutamate + ATP = L-glutamyl 5-phosphate + ADP. It participates in amino-acid biosynthesis; L-proline biosynthesis; L-glutamate 5-semialdehyde from L-glutamate: step 1/2. In terms of biological role, catalyzes the transfer of a phosphate group to glutamate to form L-glutamate 5-phosphate. The polypeptide is Glutamate 5-kinase (Yersinia pestis bv. Antiqua (strain Antiqua)).